The chain runs to 449 residues: UDP-N-acetylmuramoylalanine--D-glutamate ligase (449 aa).

118–124 (GTNGKTT) lines the ATP pocket.

This sequence belongs to the MurCDEF family.

The protein resides in the cytoplasm. The enzyme catalyses UDP-N-acetyl-alpha-D-muramoyl-L-alanine + D-glutamate + ATP = UDP-N-acetyl-alpha-D-muramoyl-L-alanyl-D-glutamate + ADP + phosphate + H(+). Its pathway is cell wall biogenesis; peptidoglycan biosynthesis. Its function is as follows. Cell wall formation. Catalyzes the addition of glutamate to the nucleotide precursor UDP-N-acetylmuramoyl-L-alanine (UMA). This Staphylococcus aureus (strain MW2) protein is UDP-N-acetylmuramoylalanine--D-glutamate ligase.